Consider the following 281-residue polypeptide: Phosphatidylglycerol--prolipoprotein diacylglyceryl transferase (281 aa).

The next 4 membrane-spanning stretches (helical) occupy residues 23–43, 71–91, 107–127, and 133–153; these read VGPL…LFAW, FVIW…VLFY, WDGG…MILF, and ILVW…LGVV. A 1,2-diacyl-sn-glycero-3-phospho-(1'-sn-glycerol) is bound at residue Arg-154. The next 3 helical transmembrane spans lie at 189–209, 217–237, and 247–267; these read LYEA…LVWG, GFVA…VEFF, and LFGG…LLGL.

This sequence belongs to the Lgt family.

The protein localises to the cell inner membrane. The enzyme catalyses L-cysteinyl-[prolipoprotein] + a 1,2-diacyl-sn-glycero-3-phospho-(1'-sn-glycerol) = an S-1,2-diacyl-sn-glyceryl-L-cysteinyl-[prolipoprotein] + sn-glycerol 1-phosphate + H(+). It participates in protein modification; lipoprotein biosynthesis (diacylglyceryl transfer). In terms of biological role, catalyzes the transfer of the diacylglyceryl group from phosphatidylglycerol to the sulfhydryl group of the N-terminal cysteine of a prolipoprotein, the first step in the formation of mature lipoproteins. The polypeptide is Phosphatidylglycerol--prolipoprotein diacylglyceryl transferase (Brucella abortus (strain S19)).